The following is a 54-amino-acid chain: Potassium channel toxin alpha-KTx 14.x (54 aa).

An N-terminal signal peptide occupies residues 1–23; sequence MKIFFAILLILAVCSMAIWTVNG. 3 cysteine pairs are disulfide-bonded: Cys30-Cys46, Cys36-Cys51, and Cys40-Cys53.

It belongs to the short scorpion toxin superfamily. Potassium channel inhibitor family. Alpha-KTx 14 subfamily. Expressed by the venom gland.

Its subcellular location is the secreted. Potassium channels inhibitor. In Olivierus martensii (Manchurian scorpion), this protein is Potassium channel toxin alpha-KTx 14.x.